The sequence spans 358 residues: Reverse gyrase subunit A (358 aa).

Positions 1–351 constitute a Topo IA-type catalytic domain; it reads MNATLRIRNR…KLYLELERVV (351 aa). Residue Tyr-78 is the O-(5'-phospho-DNA)-tyrosine intermediate of the active site.

This sequence belongs to the type IA topoisomerase family. In terms of assembly, heterodimer of an RgyrA and RgyrB subunit. The topoisomerase domain is shared between the two subunits. The cofactor is Mg(2+).

It localises to the cytoplasm. Modifies the topological state of DNA by introducing positive supercoils in an ATP-dependent process; dATP also allows positive supercoiling. Increases the linking number in steps of +1. Only this subunit binds DNA, in isolation it does not hydrolyze ATP. Hydrolyzes ATP only in the presence of DNA. Transiently cleaves a single DNA strand and remains covalently bound to the 5' DNA end probably through a tyrosine residue. It changes linking number in steps of one, and nicks DNA preferentially at 5'-CNNN | 3'-sites with a strong preference for 4 pyrimidine residues. There are about 1000 heterodimers per cell. May be involved in rewinding the DNA strands in the regions of the chromosome that have opened up to allow transcription or replication. Its function is as follows. Reverse gyrase activity is reconstituted after incubation at 80 degrees Celsius for 5 minutes, positive supercoiling requires ATP and Mg(2+). In the presence of ATP it binds and nicks substrate but does not make closed product. This Methanopyrus kandleri (strain AV19 / DSM 6324 / JCM 9639 / NBRC 100938) protein is Reverse gyrase subunit A.